Consider the following 507-residue polypeptide: MQGATTLDAASPGPLALLGLLFAATLLLSALFLLTRRTRRPREPPLIKGWLPYLGMALKFFKDPLTFLKTLQRQHGDTFTVFLVGKYITFVLNPFQYQYVTKNPKQLSFQKFSSRLSAKAFSVKKLLTDDDLNEDVHRAYLLLQGKPLDALLETMIQEVKELFESQLLKITDWNTERIFAFCGSLVFEITFATLYGKILAGNKKQIISELRDDFFKFDDMFPYLVSDIPIQLLRNEESMQKKIIKCLTSEKVAQMQGQSKIVQERQDLLKRYYRHDDPEIGAHHLGFLWASLANTIPAMFWAMYYILRHPEAMEALRDEIDSFLQSTGQKKGPGISVHFTREQLDSLVCLESTILEVLRLCSYSSIIREVQEDMNLSLESKSFSLRKGDFVALFPPLIHNDPEIFDAPKEFRFDRFIEDGKKKSTFFKGGKKLKTYVMPFGLGTSKCPGRYFAVNEMKLLLIMLLTYFDLEIIDRKPIGLNHSRMFLGIQHPDSAVSFRYKAKSWRS.

3 consecutive transmembrane segments (helical) span residues 14 to 34 (PLAL…LFLL), 178 to 198 (IFAF…YGKI), and 287 to 307 (FLWA…YYIL). Cys447 serves as a coordination point for heme.

Belongs to the cytochrome P450 family. Requires heme as cofactor. In terms of tissue distribution, highly expressed in brain structures including the corpus callosum, the anterior commissure and fornix. The hippocampal expression is particularly prominent in the dentate gyrus. Expressed in liver and kidney. The hepatic expression is sexually dimorphic, predominantly detected in male liver while barely detectable in females. Expressed in lymph nodes and spleens, in both lymphoid and stromal compartments. Higher expression is detected in fibroblastic reticular cells, a type of stromal cells in the lymph nodes. Also expressed at high levels in the outer follicle and at the B cell-T cell boundary of splenic germinal centers. Expressed in dendritic cells (DCs) subpopulations being most abundant in CD8-positive DCs.

It is found in the endoplasmic reticulum membrane. It localises to the microsome membrane. It catalyses the reaction 25-hydroxycholesterol + reduced [NADPH--hemoprotein reductase] + O2 = 7alpha,25-dihydroxycholesterol + oxidized [NADPH--hemoprotein reductase] + H2O + H(+). It carries out the reaction (25R)-cholest-5-ene-3beta,26-diol + reduced [NADPH--hemoprotein reductase] + O2 = (25R)-cholest-5-en-3beta,7alpha,26-triol + oxidized [NADPH--hemoprotein reductase] + H2O + H(+). The enzyme catalyses (24S)-hydroxycholesterol + reduced [NADPH--hemoprotein reductase] + O2 = (24S)-7alpha-dihydroxycholesterol + oxidized [NADPH--hemoprotein reductase] + H2O + H(+). The catalysed reaction is (24S)-25-epoxycholesterol + reduced [NADPH--hemoprotein reductase] + O2 = (24S,25)-epoxy-7alpha-hydroxycholesterol + oxidized [NADPH--hemoprotein reductase] + H2O + H(+). It catalyses the reaction (22R)-hydroxycholesterol + reduced [NADPH--hemoprotein reductase] + O2 = (22R,7alpha)-dihydroxycholesterol + oxidized [NADPH--hemoprotein reductase] + H2O + H(+). It carries out the reaction androst-5-en-3beta,17beta-diol + reduced [NADPH--hemoprotein reductase] + O2 = androst-5-en-3beta,7alpha,17beta-triol + oxidized [NADPH--hemoprotein reductase] + H2O + H(+). The enzyme catalyses 5alpha-androstane-3beta,17beta-diol + reduced [NADPH--hemoprotein reductase] + O2 = 5alpha-androstane-3beta,6alpha,17beta-triol + oxidized [NADPH--hemoprotein reductase] + H2O + H(+). The catalysed reaction is 3beta-hydroxyandrost-5-en-17-one + reduced [NADPH--hemoprotein reductase] + O2 = 3beta,7alpha-dihydroxyandrost-5-en-17-one + oxidized [NADPH--hemoprotein reductase] + H2O + H(+). It catalyses the reaction 3beta-hydroxy-5alpha-androstan-17-one + reduced [NADPH--hemoprotein reductase] + O2 = 3beta,7alpha-dihydroxy-5alpha-androstan-17-one + oxidized [NADPH--hemoprotein reductase] + H2O + H(+). It carries out the reaction pregnenolone + reduced [NADPH--hemoprotein reductase] + O2 = 7alpha-hydroxypregnenolone + oxidized [NADPH--hemoprotein reductase] + H2O + H(+). Its pathway is lipid metabolism; bile acid biosynthesis. The protein operates within steroid hormone biosynthesis. With respect to regulation, inhibited by drugs voriconazole and metyrapone. A cytochrome P450 monooxygenase involved in the metabolism of endogenous oxysterols and steroid hormones, including neurosteroids. Mechanistically, uses molecular oxygen inserting one oxygen atom into a substrate, and reducing the second into a water molecule, with two electrons provided by NADPH via cytochrome P450 reductase (CPR; NADPH-ferrihemoprotein reductase). Catalyzes the hydroxylation of carbon hydrogen bonds of steroids with a preference for 7-alpha position. Usually metabolizes steroids carrying a hydroxy group at position 3, functioning as a 3-hydroxy steroid 7-alpha hydroxylase. Hydroxylates oxysterols, including 25-hydroxycholesterol and (25R)-cholest-5-ene-3beta,26-diol toward 7-alpha hydroxy derivatives, which may be transported to the liver and converted to bile acids. Via its product 7-alpha,25-dihydroxycholesterol, a ligand for the chemotactic G protein-coupled receptor GPR183/EBI2, regulates B cell migration in germinal centers of lymphoid organs, thus guiding efficient maturation of plasma B cells and overall antigen-specific humoral immune response. 7-alpha hydroxylates neurosteroids, including 3beta-hydroxyandrost-5-en-17-one (dehydroepiandrosterone) and pregnenolone, both involved in hippocampus-associated memory and learning. Metabolizes androstanoids toward 6- or 7-alpha hydroxy derivatives. This chain is Cytochrome P450 7B1, found in Mus musculus (Mouse).